We begin with the raw amino-acid sequence, 65 residues long: Large ribosomal subunit protein bL35 (65 aa).

Residues 1-11 show a composition bias toward basic residues; the sequence is MPKIKTRRSAA. Disordered stretches follow at residues 1 to 24 and 41 to 65; these read MPKIKTRRSAAKRFSVTGSGKFKR and RMRLGQSATVDSTNEKAVRRMMPYA.

This sequence belongs to the bacterial ribosomal protein bL35 family.

This Nitratidesulfovibrio vulgaris (strain DSM 19637 / Miyazaki F) (Desulfovibrio vulgaris) protein is Large ribosomal subunit protein bL35.